A 251-amino-acid polypeptide reads, in one-letter code: Flap endonuclease Xni (251 aa).

A Mg(2+)-binding site is contributed by D104. The 90-residue stretch at 160–249 (VTPEQLADYW…LDGNLQQLRL (90 aa)) folds into the 5'-3' exonuclease domain. K(+)-binding residues include L171, A172, P180, V182, and I185. The tract at residues 184 to 189 (GIGPKS) is interaction with DNA.

The protein belongs to the Xni family. The cofactor is Mg(2+). K(+) serves as cofactor.

Functionally, has flap endonuclease activity. During DNA replication, flap endonucleases cleave the 5'-overhanging flap structure that is generated by displacement synthesis when DNA polymerase encounters the 5'-end of a downstream Okazaki fragment. The chain is Flap endonuclease Xni from Klebsiella pneumoniae subsp. pneumoniae (strain ATCC 700721 / MGH 78578).